The primary structure comprises 512 residues: GMP synthase [glutamine-hydrolyzing] (512 aa).

The region spanning T7 to G197 is the Glutamine amidotransferase type-1 domain. C84 acts as the Nucleophile in catalysis. Catalysis depends on residues H171 and E173. The region spanning W198 to R387 is the GMPS ATP-PPase domain. S225–S231 is an ATP binding site.

Homodimer.

The enzyme catalyses XMP + L-glutamine + ATP + H2O = GMP + L-glutamate + AMP + diphosphate + 2 H(+). It functions in the pathway purine metabolism; GMP biosynthesis; GMP from XMP (L-Gln route): step 1/1. Its function is as follows. Catalyzes the synthesis of GMP from XMP. This is GMP synthase [glutamine-hydrolyzing] from Bacillus cereus (strain B4264).